Consider the following 187-residue polypeptide: ATP synthase subunit b 2 (187 aa).

A helical membrane pass occupies residues 32–52 (TTFAAQILWLAIAFGLLYYLM).

Belongs to the ATPase B chain family. F-type ATPases have 2 components, F(1) - the catalytic core - and F(0) - the membrane proton channel. F(1) has five subunits: alpha(3), beta(3), gamma(1), delta(1), epsilon(1). F(0) has three main subunits: a(1), b(2) and c(10-14). The alpha and beta chains form an alternating ring which encloses part of the gamma chain. F(1) is attached to F(0) by a central stalk formed by the gamma and epsilon chains, while a peripheral stalk is formed by the delta and b chains.

It is found in the cell inner membrane. Its function is as follows. F(1)F(0) ATP synthase produces ATP from ADP in the presence of a proton or sodium gradient. F-type ATPases consist of two structural domains, F(1) containing the extramembraneous catalytic core and F(0) containing the membrane proton channel, linked together by a central stalk and a peripheral stalk. During catalysis, ATP synthesis in the catalytic domain of F(1) is coupled via a rotary mechanism of the central stalk subunits to proton translocation. Functionally, component of the F(0) channel, it forms part of the peripheral stalk, linking F(1) to F(0). The b'-subunit is a diverged and duplicated form of b found in plants and photosynthetic bacteria. This chain is ATP synthase subunit b 2 (atpF2), found in Methylobacterium sp. (strain 4-46).